The following is a 304-amino-acid chain: Methionyl-tRNA formyltransferase (304 aa).

107–110 (SLLP) contributes to the (6S)-5,6,7,8-tetrahydrofolate binding site.

Belongs to the Fmt family.

It carries out the reaction L-methionyl-tRNA(fMet) + (6R)-10-formyltetrahydrofolate = N-formyl-L-methionyl-tRNA(fMet) + (6S)-5,6,7,8-tetrahydrofolate + H(+). Attaches a formyl group to the free amino group of methionyl-tRNA(fMet). The formyl group appears to play a dual role in the initiator identity of N-formylmethionyl-tRNA by promoting its recognition by IF2 and preventing the misappropriation of this tRNA by the elongation apparatus. This chain is Methionyl-tRNA formyltransferase, found in Coprothermobacter proteolyticus (strain ATCC 35245 / DSM 5265 / OCM 4 / BT).